The primary structure comprises 91 residues: Large ribosomal subunit protein bL31B (91 aa).

It belongs to the bacterial ribosomal protein bL31 family. Type B subfamily. As to quaternary structure, part of the 50S ribosomal subunit.

The sequence is that of Large ribosomal subunit protein bL31B from Neisseria meningitidis serogroup C (strain 053442).